The primary structure comprises 146 residues: VHLSSEEKGLITSLWGKIDIEQTGGEALGRLLIVYPWTSRFFDHFGDLSSAKAVLGNAKVLAHGAKVLVSFGDAIKNLDNLKGTFAKLSELHCDKLHVDPENFKLLGNVLVICLAEHFGKDFTIDAQVAWQKLVAGVANALAHKYH.

N-acetylvaline is present on V1. In terms of domain architecture, Globin spans 2-146 (HLSSEEKGLI…VANALAHKYH (145 aa)). T12 is modified (phosphothreonine). K59 carries the N6-acetyllysine modification. Residue H63 coordinates heme b. K82 carries the N6-acetyllysine modification. A heme b-binding site is contributed by H92. C93 is modified (S-nitrosocysteine). Position 144 is an N6-acetyllysine (K144).

Belongs to the globin family. Heterotetramer of two alpha chains and two beta chains. In terms of tissue distribution, red blood cells.

Involved in oxygen transport from the lung to the various peripheral tissues. In Potorous tridactylus (Potoroo), this protein is Hemoglobin subunit beta (HBB).